The sequence spans 142 residues: Small ribosomal subunit protein uS12 (142 aa).

It belongs to the universal ribosomal protein uS12 family. Part of the 30S ribosomal subunit.

Its function is as follows. With S4 and S5 plays an important role in translational accuracy. Located at the interface of the 30S and 50S subunits. In Methanococcoides burtonii (strain DSM 6242 / NBRC 107633 / OCM 468 / ACE-M), this protein is Small ribosomal subunit protein uS12.